The primary structure comprises 610 residues: Glutamine--fructose-6-phosphate aminotransferase [isomerizing] (610 aa).

Cys-2 (nucleophile; for GATase activity) is an active-site residue. Residues 2–220 enclose the Glutamine amidotransferase type-2 domain; the sequence is CGIISAISKK…EGDIAILSHK (219 aa). 2 consecutive SIS domains span residues 289 to 429 and 461 to 600; these read AHAL…LKTN and LAKE…IDKP. The active-site For Fru-6P isomerization activity is the Lys-605.

Homodimer.

It is found in the cytoplasm. The enzyme catalyses D-fructose 6-phosphate + L-glutamine = D-glucosamine 6-phosphate + L-glutamate. Catalyzes the first step in hexosamine metabolism, converting fructose-6P into glucosamine-6P using glutamine as a nitrogen source. The polypeptide is Glutamine--fructose-6-phosphate aminotransferase [isomerizing] (Buchnera aphidicola subsp. Baizongia pistaciae (strain Bp)).